The primary structure comprises 87 residues: Tektin-2 (87 aa).

Residues 26 to 55 (VEEELLKEVEVIEATKKALQQRVSQAFQQL) are a coiled coil.

This sequence belongs to the tektin family. Microtubule inner protein component of sperm flagellar doublet microtubules. May interact with CCDC172. Post-translationally, tyrosine phosphorylated. In terms of processing, ubiquitinated, leading to its degradation. Deubiquitinated by USP16, promoting its stability. As to expression, detected in sperm flagella (at protein level).

Its subcellular location is the cytoplasm. The protein resides in the cytoskeleton. It localises to the cilium axoneme. The protein localises to the flagellum axoneme. It is found in the microtubule organizing center. In terms of biological role, microtubule inner protein (MIP) part of the dynein-decorated doublet microtubules (DMTs) in cilia and flagellar axoneme. Plays a key role in the assembly or attachment of the inner dynein arm to microtubules in sperm flagella and tracheal cilia. Forms filamentous polymers in the walls of ciliary and flagellar microtubules. This is Tektin-2 from Mesocricetus auratus (Golden hamster).